A 295-amino-acid polypeptide reads, in one-letter code: Probable protein phosphatase 2C 54 (295 aa).

Residues 78–289 (GHGVVSVMGR…ENINVIVIDL (212 aa)) enclose the PPM-type phosphatase domain. Positions 112, 113, 228, and 280 each coordinate Mn(2+).

Belongs to the PP2C family. Requires Mg(2+) as cofactor. It depends on Mn(2+) as a cofactor.

It carries out the reaction O-phospho-L-seryl-[protein] + H2O = L-seryl-[protein] + phosphate. The catalysed reaction is O-phospho-L-threonyl-[protein] + H2O = L-threonyl-[protein] + phosphate. This chain is Probable protein phosphatase 2C 54, found in Arabidopsis thaliana (Mouse-ear cress).